A 99-amino-acid chain; its full sequence is Protein S100-Z (99 aa).

2 consecutive EF-hand domains span residues Ile13–Cys48 and Lys50–Ala85. 9 residues coordinate Ca(2+): Ser20, Glu23, Lys28, Glu33, Asp63, Asn65, Asp67, Glu69, and Glu74.

The protein belongs to the S-100 family. As to quaternary structure, homodimer. Interacts with S100P. In terms of tissue distribution, highest level of expression in spleen and leukocytes.

In Homo sapiens (Human), this protein is Protein S100-Z.